We begin with the raw amino-acid sequence, 1297 residues long: Cingulin-like protein 1 (1297 aa).

A head region spans residues 1–550 (MELYFGEYQH…ELTQQTNEET (550 aa)). The short motif at 37-51 (AGSYGVSIRVQGIDG) is the ZIM element. Residues Ser113, Ser203, and Ser257 each carry the phosphoserine modification. Disordered regions lie at residues 161–208 (NEVN…TSED), 245–306 (GVGE…TPTS), 364–396 (KPGL…AFPF), and 428–467 (QRSV…DGKV). The segment covering 197-206 (YGSQPNSPTS) has biased composition (polar residues). The segment covering 268–283 (ETKKNRPDVLPFRRQD) has biased composition (basic and acidic residues). Phosphoserine occurs at positions 284, 298, and 299. Positions 297 to 306 (SSSSSTTPTS) are enriched in low complexity. Residues 367 to 378 (LQRRGRSGKRNR) show a composition bias toward basic residues. Over residues 379–389 (INPDDRKRSRS) the composition is skewed to basic and acidic residues. Phosphoserine occurs at positions 389 and 392. A Phosphoserine modification is found at Ser482. Positions 586-608 (SRAAGSAQGSNQAPNSPSEGNSL) are disordered. Polar residues predominate over residues 592-608 (AQGSNQAPNSPSEGNSL). Positions 604–1251 (EGNSLLDQKN…LQGQLNSLKK (648 aa)) form a coiled coil. Phosphoserine is present on residues Ser678 and Ser704. Residues 1259-1297 (SSKVLDDSDDDDLSSDAGSLYEAPLSYAFPKDSTIASQI) form a tail region.

Belongs to the cingulin family. In terms of assembly, homodimer or oligomer. Interacts with CD2AP and SH3BP1; probably part of a complex at cell junctions. As to expression, widely expressed. Highly expressed in the kidney and lung.

The protein resides in the cell junction. It localises to the tight junction. In terms of biological role, may be involved in anchoring the apical junctional complex, especially tight junctions, to actin-based cytoskeletons. The polypeptide is Cingulin-like protein 1 (Mus musculus (Mouse)).